The sequence spans 100 residues: Aspartyl/glutamyl-tRNA(Asn/Gln) amidotransferase subunit C (100 aa).

It belongs to the GatC family. Heterotrimer of A, B and C subunits.

It carries out the reaction L-glutamyl-tRNA(Gln) + L-glutamine + ATP + H2O = L-glutaminyl-tRNA(Gln) + L-glutamate + ADP + phosphate + H(+). The catalysed reaction is L-aspartyl-tRNA(Asn) + L-glutamine + ATP + H2O = L-asparaginyl-tRNA(Asn) + L-glutamate + ADP + phosphate + 2 H(+). In terms of biological role, allows the formation of correctly charged Asn-tRNA(Asn) or Gln-tRNA(Gln) through the transamidation of misacylated Asp-tRNA(Asn) or Glu-tRNA(Gln) in organisms which lack either or both of asparaginyl-tRNA or glutaminyl-tRNA synthetases. The reaction takes place in the presence of glutamine and ATP through an activated phospho-Asp-tRNA(Asn) or phospho-Glu-tRNA(Gln). The chain is Aspartyl/glutamyl-tRNA(Asn/Gln) amidotransferase subunit C from Streptococcus mutans serotype c (strain ATCC 700610 / UA159).